Reading from the N-terminus, the 59-residue chain is Large ribosomal subunit protein bL33 (59 aa).

The interval 26–59 (RYTTTKNKKNNTERLVLKKYNPNLKKHTEHKEIK) is disordered.

This sequence belongs to the bacterial ribosomal protein bL33 family.

The protein is Large ribosomal subunit protein bL33 of Chlorobium phaeobacteroides (strain BS1).